The primary structure comprises 878 residues: MutS protein homolog 4 (878 aa).

Residues 22–41 form a disordered region; the sequence is NSSNSISKPSTKKSIRNQKS. Position 634 to 641 (634 to 641) interacts with ATP; the sequence is GCNMSGKS.

This sequence belongs to the DNA mismatch repair MutS family. Heterooligomer of MSH4 and MSH5.

Involved in meiotic recombination. Facilitate crossovers between homologs during meiosis. In Saccharomyces cerevisiae (strain ATCC 204508 / S288c) (Baker's yeast), this protein is MutS protein homolog 4 (MSH4).